The sequence spans 1207 residues: DNA-directed RNA polymerase subunit beta' (1207 aa).

The Zn(2+) site is built by Cys60, Cys62, Cys75, and Cys78. Positions 450, 452, and 454 each coordinate Mg(2+). The Zn(2+) site is built by Cys818, Cys892, Cys899, and Cys902.

Belongs to the RNA polymerase beta' chain family. In terms of assembly, the RNAP catalytic core consists of 2 alpha, 1 beta, 1 beta' and 1 omega subunit. When a sigma factor is associated with the core the holoenzyme is formed, which can initiate transcription. Mg(2+) serves as cofactor. Zn(2+) is required as a cofactor.

It carries out the reaction RNA(n) + a ribonucleoside 5'-triphosphate = RNA(n+1) + diphosphate. In terms of biological role, DNA-dependent RNA polymerase catalyzes the transcription of DNA into RNA using the four ribonucleoside triphosphates as substrates. In Lactococcus lactis subsp. cremoris (strain SK11), this protein is DNA-directed RNA polymerase subunit beta'.